We begin with the raw amino-acid sequence, 481 residues long: 4-hydroxyphenylacetate 3-monooxygenase oxygenase component (481 aa).

Substrate-binding positions include 100 to 104 (RSPDY) and His-142. FAD is bound by residues 142 to 144 (HAL), 148 to 151 (QVNR), and Thr-185. 197-198 (ST) is a substrate binding site. Position 444-447 (444-447 (DPVR)) interacts with FAD.

This sequence belongs to the FADH(2)-utilizing monooxygenase family. In terms of assembly, homotetramer consisting of a dimer of dimers. 4-HPA 3-monooxygenase consists of a reductase component HpaC and an oxygenase component HpaB.

The catalysed reaction is 4-hydroxyphenylacetate + FADH2 + O2 = 3,4-dihydroxyphenylacetate + FAD + H2O + H(+). Its pathway is aromatic compound metabolism; 4-hydroxyphenylacetate degradation; pyruvate and succinate semialdehyde from 4-hydroxyphenylacetate: step 1/7. Its function is as follows. Utilizes FADH(2) supplied by HpaC, to catalyze the hydroxylation of 4-hydroxyphenylacetic acid, leading to the production of 3,4-dihydroxyphenylacetic acid (DHPA). This Thermus thermophilus (strain ATCC 27634 / DSM 579 / HB8) protein is 4-hydroxyphenylacetate 3-monooxygenase oxygenase component.